We begin with the raw amino-acid sequence, 88 residues long: MARVTVQDAVEKIGNRFDLVLVAARRARQIQSGGKDALVPEENDKVTVIALREIEEGLITNQILDVRERQEQQAAEIQAVTAIAEGRR.

It belongs to the RNA polymerase subunit omega family. As to quaternary structure, the RNAP catalytic core consists of 2 alpha, 1 beta, 1 beta' and 1 omega subunit. When a sigma factor is associated with the core the holoenzyme is formed, which can initiate transcription.

It carries out the reaction RNA(n) + a ribonucleoside 5'-triphosphate = RNA(n+1) + diphosphate. Functionally, promotes RNA polymerase assembly. Latches the N- and C-terminal regions of the beta' subunit thereby facilitating its interaction with the beta and alpha subunits. In Yersinia pestis (strain Pestoides F), this protein is DNA-directed RNA polymerase subunit omega.